A 419-amino-acid chain; its full sequence is Peptide chain release factor subunit 1 (419 aa).

The protein belongs to the eukaryotic release factor 1 family. As to quaternary structure, heterodimer of two subunits, one of which binds GTP.

The protein localises to the cytoplasm. In terms of biological role, directs the termination of nascent peptide synthesis (translation) in response to the termination codons UAA, UAG and UGA. The protein is Peptide chain release factor subunit 1 of Methanococcus maripaludis (strain C5 / ATCC BAA-1333).